Reading from the N-terminus, the 512-residue chain is Serine/threonine-protein kinase grp (512 aa).

A Protein kinase domain is found at 22 to 279; that stretch reads WTLAQTLGEG…LEKTLDHKWC (258 aa). Residues 28–36 and K51 contribute to the ATP site; that span reads LGEGAYGEV. D143 functions as the Proton acceptor in the catalytic mechanism. The interval 335 to 360 is disordered; that stretch reads PTMRSDDDFNVRLGSGRSKEDGGDRQ.

This sequence belongs to the protein kinase superfamily. CAMK Ser/Thr protein kinase family. NIM1 subfamily. Post-translationally, phosphorylated in a MEI-41/ATR dependent manner in response to DNA damage or the presence of unreplicated DNA.

It localises to the nucleus. The catalysed reaction is L-seryl-[protein] + ATP = O-phospho-L-seryl-[protein] + ADP + H(+). It catalyses the reaction L-threonyl-[protein] + ATP = O-phospho-L-threonyl-[protein] + ADP + H(+). Serine/threonine-protein kinase which is required for checkpoint-mediated cell cycle arrest and activation of DNA repair in response to the presence of DNA damage or unreplicated DNA. May also negatively regulate cell cycle progression during unperturbed cell cycles. May phosphorylate the CDC25 phosphatase stg, which promotes its degradation. This results in increased inhibitory tyrosine phosphorylation of Cdk1-cyclin complexes and consequent inhibition of cell cycle progression. The protein is Serine/threonine-protein kinase grp of Drosophila melanogaster (Fruit fly).